A 133-amino-acid chain; its full sequence is ATP synthase epsilon chain (133 aa).

Belongs to the ATPase epsilon chain family. In terms of assembly, F-type ATPases have 2 components, CF(1) - the catalytic core - and CF(0) - the membrane proton channel. CF(1) has five subunits: alpha(3), beta(3), gamma(1), delta(1), epsilon(1). CF(0) has three main subunits: a, b and c.

The protein resides in the cell membrane. In terms of biological role, produces ATP from ADP in the presence of a proton gradient across the membrane. This is ATP synthase epsilon chain (atpC) from Clostridium acetobutylicum (strain ATCC 824 / DSM 792 / JCM 1419 / IAM 19013 / LMG 5710 / NBRC 13948 / NRRL B-527 / VKM B-1787 / 2291 / W).